An 80-amino-acid chain; its full sequence is Small ribosomal subunit protein uS17 (80 aa).

This sequence belongs to the universal ribosomal protein uS17 family. Part of the 30S ribosomal subunit.

In terms of biological role, one of the primary rRNA binding proteins, it binds specifically to the 5'-end of 16S ribosomal RNA. The chain is Small ribosomal subunit protein uS17 from Beijerinckia indica subsp. indica (strain ATCC 9039 / DSM 1715 / NCIMB 8712).